A 905-amino-acid polypeptide reads, in one-letter code: Microtubule-associated protein 10 (905 aa).

Disordered stretches follow at residues 30–51 (AAAV…SSPR), 199–235 (TRTG…KPLG), 329–362 (APEE…AHEH), 434–458 (SPES…GGCE), 547–586 (SSAE…FDEP), 721–772 (RSFK…GSPV), and 786–855 (KSLE…SSYL). A compositionally biased stretch (acidic residues) spans 34 to 43 (EQEEEEEEKE). Low complexity predominate over residues 208–227 (SPQTQQERQQLQQPASQPSP). A compositionally biased stretch (basic and acidic residues) spans 443–453 (CRSEAKKDKRS). The segment covering 567–579 (ASFTENSDTSRQI) has biased composition (polar residues). Over residues 721-736 (RSFKAHDSSSRTENPK) the composition is skewed to basic and acidic residues. A compositionally biased stretch (polar residues) spans 737–748 (HSQYTSKSSDTG). Over residues 790 to 801 (EASSISASDLSS) the composition is skewed to low complexity. Residues 830–855 (SVKTRSSWKSLEKSQSPQTSQVSSYL) are compositionally biased toward polar residues.

Interacts (via middle region) with microtubules. In terms of tissue distribution, expressed in different cell lines (at protein level).

It is found in the cytoplasm. It localises to the cytoskeleton. The protein localises to the spindle pole. Its subcellular location is the microtubule organizing center. The protein resides in the centrosome. It is found in the midbody. Its function is as follows. Microtubule-associated protein (MAP) that plays a role in the regulation of cell division; promotes microtubule stability and participates in the organization of the spindle midzone and normal progress of cytokinesis. This chain is Microtubule-associated protein 10 (MAP10), found in Homo sapiens (Human).